The sequence spans 187 residues: Hypoxanthine/guanine phosphoribosyltransferase (187 aa).

Belongs to the purine/pyrimidine phosphoribosyltransferase family. Archaeal HPRT subfamily. As to quaternary structure, homodimer.

Its subcellular location is the cytoplasm. The enzyme catalyses IMP + diphosphate = hypoxanthine + 5-phospho-alpha-D-ribose 1-diphosphate. It carries out the reaction GMP + diphosphate = guanine + 5-phospho-alpha-D-ribose 1-diphosphate. Its pathway is purine metabolism; IMP biosynthesis via salvage pathway; IMP from hypoxanthine: step 1/1. In terms of biological role, catalyzes a salvage reaction resulting in the formation of IMP that is energically less costly than de novo synthesis. This is Hypoxanthine/guanine phosphoribosyltransferase from Methanococcus voltae (strain ATCC BAA-1334 / A3).